The chain runs to 129 residues: MRHRKSGRKFNRTSAHRKSMFRNMAASLVEHELIKTTVPKAKELRRVAEPLITLAKSDSVANRRLAFSRLRSRDAVTKLFEEIGPRYKDRPGGYLRILKCGLRPGDSAPMAFVELVDRPVVEAEGDNEE.

The protein belongs to the bacterial ribosomal protein bL17 family. Part of the 50S ribosomal subunit. Contacts protein L32.

This is Large ribosomal subunit protein bL17 from Hahella chejuensis (strain KCTC 2396).